The primary structure comprises 151 residues: U1 small nuclear ribonucleoprotein C (151 aa).

The Matrin-type zinc-finger motif lies at 4 to 36 (YYCDYCDTYLTHDSPSVRKTHCTGRKHKDNVKF).

It belongs to the U1 small nuclear ribonucleoprotein C family. In terms of assembly, U1 snRNP is composed of the 7 core Sm proteins B/B', D1, D2, D3, E, F and G that assemble in a heptameric protein ring on the Sm site of the small nuclear RNA to form the core snRNP, and at least 3 U1 snRNP-specific proteins U1-70K, U1-A and U1-C. U1-C interacts with U1 snRNA and the 5' splice-site region of the pre-mRNA.

It localises to the nucleus. Its function is as follows. Component of the spliceosomal U1 snRNP, which is essential for recognition of the pre-mRNA 5' splice-site and the subsequent assembly of the spliceosome. U1-C is directly involved in initial 5' splice-site recognition for both constitutive and regulated alternative splicing. The interaction with the 5' splice-site seems to precede base-pairing between the pre-mRNA and the U1 snRNA. Stimulates commitment or early (E) complex formation by stabilizing the base pairing of the 5' end of the U1 snRNA and the 5' splice-site region. The sequence is that of U1 small nuclear ribonucleoprotein C from Anopheles darlingi (Mosquito).